Consider the following 117-residue polypeptide: Minor capsid protein p17 (117 aa).

N-linked (GlcNAc...) asparagine; by host glycosylation is present at asparagine 12. Residues 39–59 (AIILGILILLVIILIIVAIVY) traverse the membrane as a helical segment. Residues asparagine 61 and asparagine 97 are each glycosylated (N-linked (GlcNAc...) asparagine; by host).

The protein belongs to the asfivirus minor capsid protein p17 family. In terms of assembly, interacts with the minor capsid protein M1249L and with the hexon capsid protein p72 capsomers; these interactions form a rigid zipper structure that stabilizes the capsomers. Interacts with host STING1.

Its subcellular location is the virion membrane. The protein resides in the host endoplasmic reticulum membrane. In terms of biological role, together with the penton and the other minor capsid proteins (M1249L, p49), forms a complicated network immediately below the outer capsid shell, stabilizing the whole capsid. Three copies of p17 encircle each p72 capsomer in the inner capsid shell, anchoring p72 capsomers on the inner membrane. Required for the assembly of the capsid and icosahedral morphogenesis. Additionally, inhibits the host cGAS-STING pathway through its interaction with STING1 and subsequent interference of the recruitment of downstream components TBK1 and IKBKE. In Ornithodoros (relapsing fever ticks), this protein is Minor capsid protein p17.